A 156-amino-acid polypeptide reads, in one-letter code: Small ribosomal subunit protein uS7 (156 aa).

This sequence belongs to the universal ribosomal protein uS7 family. Part of the 30S ribosomal subunit. Contacts proteins S9 and S11.

In terms of biological role, one of the primary rRNA binding proteins, it binds directly to 16S rRNA where it nucleates assembly of the head domain of the 30S subunit. Is located at the subunit interface close to the decoding center, probably blocks exit of the E-site tRNA. This is Small ribosomal subunit protein uS7 from Shewanella piezotolerans (strain WP3 / JCM 13877).